The sequence spans 276 residues: Putative ankyrin repeat protein R838 (276 aa).

ANK repeat units follow at residues 134–163, 164–193, 195–223, and 225–253; these read DGDNALLMAAENGYYEVVTYLINKGCDPRS, DYDYALRSAAEKGHIDVVKLLLEKGADISS, NHWPLSYAALEGKFEMVKFLISRGADVRA, and NYNPIKYALDGGHREIADYMLDLCPEIGS. Residues 254 to 276 are disordered; sequence VSDDDTYDSDSSDYSEDDSESIN. A compositionally biased stretch (acidic residues) spans 255-276; that stretch reads SDDDTYDSDSSDYSEDDSESIN.

The chain is Putative ankyrin repeat protein R838 from Acanthamoeba polyphaga (Amoeba).